Here is a 757-residue protein sequence, read N- to C-terminus: Inhibitor of nuclear factor kappa-B kinase subunit beta (757 aa).

Positions 15–300 (WEMKERLGTG…DPQYGPNGCF (286 aa)) constitute a Protein kinase domain. ATP-binding positions include 21–29 (LGTGGFGNV) and K44. Residue D145 is the Proton acceptor of the active site. Residue K163 forms a Glycyl lysine isopeptide (Lys-Gly) (interchain with G-Cter in ubiquitin) linkage. Phosphoserine; by TBK1 and PKC/PRKCZ is present on S177. Residue C179 is modified to S-nitrosocysteine. S181 carries the post-translational modification Phosphoserine; by TBK1, PKC/PRKCZ and PDPK1. P191 bears the Hydroxyproline mark. The leucine-zipper stretch occupies residues 458 to 479 (LLRNNSCLSKMKNAMASTAQQL). S670 bears the Phosphoserine; by autocatalysis mark. Position 672 is a phosphoserine (S672). A phosphoserine; by autocatalysis mark is found at S675, S682, S689, S692, S697, S705, S733, and S740. The tract at residues 682-703 (SHPGHLMSQPSSACDSLPDSDK) is disordered. An NEMO-binding region spans residues 737 to 742 (LDWSWL).

It belongs to the protein kinase superfamily. Ser/Thr protein kinase family. I-kappa-B kinase subfamily. In terms of assembly, component of the I-kappa-B-kinase (IKK) core complex consisting of CHUK, IKBKB and IKBKG; probably four alpha/CHUK-beta/IKBKB dimers are associated with four gamma/IKBKG subunits. The IKK core complex seems to associate with regulatory or adapter proteins to form a IKK-signalosome holo-complex. The IKK complex associates with TERF2IP/RAP1, leading to promote IKK-mediated phosphorylation of RELA/p65. Part of a complex composed of NCOA2, NCOA3, CHUK/IKKA, IKBKB, IKBKG and CREBBP. Part of a 70-90 kDa complex at least consisting of CHUK/IKKA, IKBKB, NFKBIA, RELA, ELP1 and MAP3K14. Found in a membrane raft complex, at least composed of BCL10, CARD11, DPP4 and IKBKB. Interacts with SQSTM1 through PRKCZ or PRKCI. Forms an NGF-induced complex with IKBKB, PRKCI and TRAF6. May interact with MAVS/IPS1. Interacts with NALP2. Interacts with TICAM1. Interacts with FAF1; the interaction disrupts the IKK complex formation. Interacts with ATM. Part of a ternary complex consisting of TANK, IKBKB and IKBKG. Interacts with NIBP; the interaction is direct. Interacts with ARRB1 and ARRB2. Interacts with TRIM21. Interacts with NLRC5; prevents IKBKB phosphorylation and kinase activity. Interacts with PDPK1. Interacts with EIF2AK2/PKR. The phosphorylated form interacts with PPM1A and PPM1B. Interacts with ZNF268 isoform 2; the interaction is further increased in a TNF-alpha-dependent manner. Interacts with IKBKE. Interacts with ZC3H12A. Interacts with AKAP13. Interacts with LRRC14; disrupts IKBKB-IKBKG interaction preventing I-kappa-B-kinase (IKK) core complex formation and leading to a decrease of IKBKB phosphorylation and NF-kappaB activation. Interacts with SASH1. Interacts with ARFIP2. Interacts with FKBP5. Post-translationally, upon cytokine stimulation, phosphorylated on Ser-177 and Ser-181 by MEKK1 and/or MAP3K14/NIK as well as TBK1 and PRKCZ; which enhances activity. Phosphorylated by MAP3K7/TAK1 in response to NOD1 and NOD2 signaling, promoting activation and phosphorylation of NF-kappa-B inhibitors, leading to NF-kappa-B activation. Once activated, autophosphorylates on the C-terminal serine cluster; which decreases activity and prevents prolonged activation of the inflammatory response. Phosphorylated by the IKK-related kinases TBK1 and IKBKE, which is associated with reduced CHUK/IKKA and IKBKB activity and NF-kappa-B-dependent gene transcription. Dephosphorylated at Ser-177 and Ser-181 by PPM1A and PPM1B. Ubiquitinated. Monoubiquitination involves TRIM21 that leads to inhibition of Tax-induced NF-kappa-B signaling. 'Ser-163' may not serve as a monoubiquitination site. Ubiquitination on 'Ser-163' may modulate phosphorylation on C-terminal serine residues. In terms of processing, hydroxylated by PHD1/EGLN2, loss of hydroxylation under hypoxic conditions results in activation of NF-kappa-B.

Its subcellular location is the cytoplasm. It localises to the nucleus. The protein resides in the membrane raft. The enzyme catalyses L-seryl-[I-kappa-B protein] + ATP = O-phospho-L-seryl-[I-kappa-B protein] + ADP + H(+). The catalysed reaction is L-seryl-[protein] + ATP = O-phospho-L-seryl-[protein] + ADP + H(+). It carries out the reaction L-threonyl-[protein] + ATP = O-phospho-L-threonyl-[protein] + ADP + H(+). Functionally, serine kinase that plays an essential role in the NF-kappa-B signaling pathway which is activated by multiple stimuli such as inflammatory cytokines, bacterial or viral products, DNA damages or other cellular stresses. Acts as a part of the canonical IKK complex in the conventional pathway of NF-kappa-B activation. Phosphorylates inhibitors of NF-kappa-B on 2 critical serine residues. These modifications allow polyubiquitination of the inhibitors and subsequent degradation by the proteasome. In turn, free NF-kappa-B is translocated into the nucleus and activates the transcription of hundreds of genes involved in immune response, growth control, or protection against apoptosis. In addition to the NF-kappa-B inhibitors, phosphorylates several other components of the signaling pathway including NEMO/IKBKG, NF-kappa-B subunits RELA and NFKB1, as well as IKK-related kinases TBK1 and IKBKE. IKK-related kinase phosphorylations may prevent the overproduction of inflammatory mediators since they exert a negative regulation on canonical IKKs. Phosphorylates FOXO3, mediating the TNF-dependent inactivation of this pro-apoptotic transcription factor. Also phosphorylates other substrates including NAA10, NCOA3, BCL10 and IRS1. Phosphorylates RIPK1 at 'Ser-25' which represses its kinase activity and consequently prevents TNF-mediated RIPK1-dependent cell death. Phosphorylates the C-terminus of IRF5, stimulating IRF5 homodimerization and translocation into the nucleus. The chain is Inhibitor of nuclear factor kappa-B kinase subunit beta (Ikbkb) from Rattus norvegicus (Rat).